Here is a 199-residue protein sequence, read N- to C-terminus: Recombination protein RecR (199 aa).

The C4-type zinc finger occupies cysteine 57–cysteine 72. One can recognise a Toprim domain in the interval threonine 80–serine 176.

This sequence belongs to the RecR family.

Functionally, may play a role in DNA repair. It seems to be involved in an RecBC-independent recombinational process of DNA repair. It may act with RecF and RecO. This is Recombination protein RecR from Levilactobacillus brevis (strain ATCC 367 / BCRC 12310 / CIP 105137 / JCM 1170 / LMG 11437 / NCIMB 947 / NCTC 947) (Lactobacillus brevis).